The primary structure comprises 254 residues: Triosephosphate isomerase (254 aa).

A substrate-binding site is contributed by 9-11 (NWK). His-96 functions as the Electrophile in the catalytic mechanism. The active-site Proton acceptor is the Glu-169. Substrate contacts are provided by residues Gly-175, Ser-215, and 236–237 (GG).

It belongs to the triosephosphate isomerase family. Homodimer.

The protein localises to the cytoplasm. It catalyses the reaction D-glyceraldehyde 3-phosphate = dihydroxyacetone phosphate. It participates in carbohydrate biosynthesis; gluconeogenesis. The protein operates within carbohydrate degradation; glycolysis; D-glyceraldehyde 3-phosphate from glycerone phosphate: step 1/1. In terms of biological role, involved in the gluconeogenesis. Catalyzes stereospecifically the conversion of dihydroxyacetone phosphate (DHAP) to D-glyceraldehyde-3-phosphate (G3P). The polypeptide is Triosephosphate isomerase (Borrelia recurrentis (strain A1)).